A 401-amino-acid chain; its full sequence is Probable [pyruvate dehydrogenase (acetyl-transferring)] kinase, mitochondrial (401 aa).

The Histidine kinase domain occupies 131–360 (LIELRESDGV…DACIYLKAVP (230 aa)). ATP contacts are provided by residues 247-254 (ELFKNAMR), aspartate 286, 305-306 (ST), and 321-326 (GYGYGL).

The protein belongs to the PDK/BCKDK protein kinase family.

The protein localises to the mitochondrion matrix. It catalyses the reaction L-seryl-[pyruvate dehydrogenase E1 alpha subunit] + ATP = O-phospho-L-seryl-[pyruvate dehydrogenase E1 alpha subunit] + ADP + H(+). Inhibits the mitochondrial pyruvate dehydrogenase complex by phosphorylation of the E1 alpha subunit, thus contributing to the regulation of glucose metabolism. Required for normal lifespan. This is Probable [pyruvate dehydrogenase (acetyl-transferring)] kinase, mitochondrial (pdhk-2) from Caenorhabditis elegans.